Reading from the N-terminus, the 70-residue chain is DNA gyrase inhibitor YacG (70 aa).

Positions 9, 12, 28, and 32 each coordinate Zn(2+). Positions 44–70 (SRKIPGSSIDPESIVTTNNKQDNVDEQ) are disordered.

This sequence belongs to the DNA gyrase inhibitor YacG family. Interacts with GyrB. Zn(2+) is required as a cofactor.

Inhibits all the catalytic activities of DNA gyrase by preventing its interaction with DNA. Acts by binding directly to the C-terminal domain of GyrB, which probably disrupts DNA binding by the gyrase. The protein is DNA gyrase inhibitor YacG of Legionella pneumophila subsp. pneumophila (strain Philadelphia 1 / ATCC 33152 / DSM 7513).